A 575-amino-acid chain; its full sequence is Glycosyltransferase family 92 protein At1g27200 (575 aa).

A helical transmembrane segment spans residues 22-44 (FLSQRYLILCFCCFFVLLFFLSS). The 248-residue stretch at 293-540 (LCVCTMLWNQ…TEAIEPPDWK (248 aa)) folds into the GT92 domain.

It belongs to the glycosyltransferase 92 family.

It localises to the membrane. The protein is Glycosyltransferase family 92 protein At1g27200 of Arabidopsis thaliana (Mouse-ear cress).